A 1402-amino-acid polypeptide reads, in one-letter code: Erbin (1402 aa).

LRR repeat units lie at residues 23–44 (TVTTLDYSHCSLEQVPKEIFTF), 47–68 (TLEELYLDANQIEELPKQLFNC), 70–91 (SLHKLSLPDNDLTTLPASIANL), 93–114 (NLRELDVSKNGIQEFPENIKNC), 116–137 (VLTIVEASVNPISKLPDGFSQL), 139–161 (NLTQLYLNDAFLEFLPANFGRLT), 162–183 (KLQILELRENQLKMLPKTMNRL), 185–206 (QLERLDLGSNEFTEVPEVLEQL), 208–229 (GLREFWMDGNRLTFIPGFIGSL), 231–252 (QLTYLDVSKNNIEMVEEGISTC), 254–275 (NLQDFLLSSNSLQQLPETIGSL), 277–298 (NVTTLKIDENQLMYLPDSIGGL), 300–321 (SIEELDCSFNEIEALPSSIGQL), 323–344 (NMRTFAADHNYLQQLPPEIGNW), 346–367 (NITVLFLHCNKLETLPEEMGDM), 369–391 (KLKVINLSDNRLKNLPFSFTKLQ), and 392–413 (QLTAMWLSDNQSKPLIPLQKET). A phosphoserine mark is found at serine 440 and serine 444. 2 disordered regions span residues 465-489 (DEDKDEREAPPREGNLKRYPTPYPD) and 507-543 (DEETNEESGRDLKQHEDQQVVNKDKCVKTSESTTTKS). Residues 470-480 (EREAPPREGNL) show a composition bias toward basic and acidic residues. Tyrosine 483 is subject to Phosphotyrosine. Position 485 is a phosphothreonine (threonine 485). The span at 507 to 534 (DEETNEESGRDLKQHEDQQVVNKDKCVK) shows a compositional bias: basic and acidic residues. Residues serine 595, serine 599, serine 600, and serine 617 each carry the phosphoserine modification. Residues 629–638 (NKKDDAKDAD) are compositionally biased toward basic and acidic residues. The segment at 629 to 694 (NKKDDAKDAD…PVDSNSKVRQ (66 aa)) is disordered. A compositionally biased stretch (low complexity) spans 647–659 (NSNQNNSNCSSPS). A compositionally biased stretch (polar residues) spans 660–689 (RMSDSVSLNTDSSQDTSLCSPVKQTPVDSN). Phosphoserine occurs at positions 712, 849, 854, and 869. The segment at 824–864 (EDTAPSPGRVEPQKASSSADVGISKSTEDLSPQRSGPTGAV) is disordered. The residue at position 914 (threonine 914) is a Phosphothreonine. The residue at position 917 (tyrosine 917) is a Phosphotyrosine. Serine 928 is modified (phosphoserine). Residue tyrosine 970 is modified to Phosphotyrosine. Disordered stretches follow at residues 990 to 1018 (WHPKQNPQIDPVSFPPQRLPRSESAENHS) and 1070 to 1093 (TTIQRQSSVSSTASVNLGDPTRRT). Residues 1070-1084 (TTIQRQSSVSSTASV) show a composition bias toward polar residues. Position 1097 is a phosphotyrosine (tyrosine 1097). Disordered stretches follow at residues 1107–1187 (GRTP…VPHD), 1198–1217 (AKKLEKHPQTSSPGECCQDD), and 1222–1274 (EEQN…VARH). Composition is skewed to polar residues over residues 1128-1139 (GPNTSRPQSARP) and 1149-1164 (MSVSDFNYSRTSPSKR). Residues serine 1150 and serine 1171 each carry the phosphoserine modification. 3 positions are modified to phosphoserine: leucine 1231, arginine 1234, and serine 1276. The PDZ domain occupies 1311-1400 (EIRVRVEKDP…AVDLIIVREV (90 aa)).

The protein belongs to the LAP (LRR and PDZ) protein family. Interacts with ERBB2, BPAG1 and ITGB4. May favor the localization of ERBB2, by restricting its presence to the basolateral membrane of epithelial cells. Also found to interact with ARVCF and delta catenin. Interacts (via C-terminus) with DST (via N-terminus). Interacts with NOD2 (via CARD domain). Isoform 2 is phosphorylated on Ser-1231 and Ser-1234.

The protein resides in the cell junction. It is found in the hemidesmosome. It localises to the nucleus membrane. The protein localises to the basolateral cell membrane. Acts as an adapter for the receptor ERBB2, in epithelia. By binding the unphosphorylated ERBB2 'Tyr-1248' receptor, it may contribute to stabilize this unphosphorylated state. Inhibits NOD2-dependent NF-kappa-B signaling and pro-inflammatory cytokine secretion. This is Erbin from Mus musculus (Mouse).